Consider the following 444-residue polypeptide: Protein CPn_0808/CP_1063/CPj0808/CpB0837 (444 aa).

Positions 1–13 (MTSGVSGSSSQDP) are enriched in polar residues. Positions 1–124 (MTSGVSGSSS…NNYDSPSLPT (124 aa)) are disordered. The span at 15 to 24 (LAAQLAQSSQ) shows a compositional bias: low complexity. A compositionally biased stretch (polar residues) spans 25-42 (KAGNAQSGHDTKNVTKQG). The span at 77–86 (SKGEKSEKSG) shows a compositional bias: basic and acidic residues. Residues 88–103 (SKSSTSVASASETATA) are compositionally biased toward low complexity. A compositionally biased stretch (polar residues) spans 113 to 124 (RQNNYDSPSLPT).

Belongs to the chlamydial CPn_0808/CT_579/TC_0868 family.

This chain is Protein CPn_0808/CP_1063/CPj0808/CpB0837, found in Chlamydia pneumoniae (Chlamydophila pneumoniae).